A 338-amino-acid polypeptide reads, in one-letter code: Homocysteine S-methyltransferase 3 (338 aa).

The 315-residue stretch at 12–326 folds into the Hcy-binding domain; it reads AVRRWVDAAG…NTIRAIHRTL (315 aa). Residues C244, C311, and C312 each contribute to the Zn(2+) site.

Monomer. Requires Zn(2+) as cofactor.

It carries out the reaction S-methyl-L-methionine + L-homocysteine = 2 L-methionine + H(+). In terms of biological role, catalyzes methyl transfer from S-methylmethionine (SMM) to adenosyl-L-homocysteine (AdoMet). SMM degradation (by HMT-1, HMT-2, HMT-3 and HMT-4) and biosynthesis (by MMT1) constitute the SMM cycle in plants, which is probably required to achieve short term control of AdoMet level. The polypeptide is Homocysteine S-methyltransferase 3 (HMT-3) (Zea mays (Maize)).